The chain runs to 444 residues: Methylenetetrahydrofolate--tRNA-(uracil-5-)-methyltransferase TrmFO (444 aa).

Residue 11–16 (GGGLAG) participates in FAD binding.

The protein belongs to the MnmG family. TrmFO subfamily. It depends on FAD as a cofactor.

It localises to the cytoplasm. It carries out the reaction uridine(54) in tRNA + (6R)-5,10-methylene-5,6,7,8-tetrahydrofolate + NADH + H(+) = 5-methyluridine(54) in tRNA + (6S)-5,6,7,8-tetrahydrofolate + NAD(+). The enzyme catalyses uridine(54) in tRNA + (6R)-5,10-methylene-5,6,7,8-tetrahydrofolate + NADPH + H(+) = 5-methyluridine(54) in tRNA + (6S)-5,6,7,8-tetrahydrofolate + NADP(+). Its function is as follows. Catalyzes the folate-dependent formation of 5-methyl-uridine at position 54 (M-5-U54) in all tRNAs. This Desulfotalea psychrophila (strain LSv54 / DSM 12343) protein is Methylenetetrahydrofolate--tRNA-(uracil-5-)-methyltransferase TrmFO.